Here is a 763-residue protein sequence, read N- to C-terminus: Phosphoglycerol transferase I (763 aa).

Transmembrane regions (helical) follow at residues 1 to 21 (MSELLSVALFLASVLIYAWKA), 26 to 46 (WWFAATLTVLGLFVILNITLY), 77 to 97 (ILPGIGIALALVAVFGALGWV), and 108 to 128 (VGYSLLALLLALGSVDASPAF).

It belongs to the OpgB family.

The protein localises to the cell inner membrane. It carries out the reaction a phosphatidylglycerol + a membrane-derived-oligosaccharide D-glucose = a 1,2-diacyl-sn-glycerol + a membrane-derived-oligosaccharide 6-(glycerophospho)-D-glucose.. The protein operates within glycan metabolism; osmoregulated periplasmic glucan (OPG) biosynthesis. Functionally, transfers a phosphoglycerol residue from phosphatidylglycerol to the membrane-bound nascent glucan backbones. The chain is Phosphoglycerol transferase I from Salmonella choleraesuis (strain SC-B67).